Consider the following 1690-residue polypeptide: Restin homolog (1690 aa).

2 stretches are compositionally biased toward polar residues: residues 1–11 (MSDDTSASGGT) and 39–51 (NIPT…TGIP). The segment at 1–105 (MSDDTSASGG…ESDDNLSSIN (105 aa)) is disordered. Phosphoserine is present on residues S64 and S67. Residues 143–185 (GDTHFAAGEWAGVVLDEPNGKNDGCVSGKRYFQCEPKRGIFSR) enclose the CAP-Gly 1 domain. The segment at 195-227 (AGAQTPTSPLAKSSPDRSRTVSPTASIRSSMLR) is disordered. Residues 214–226 (TVSPTASIRSSML) show a composition bias toward polar residues. S216 is modified (phosphoserine). The region spanning 260–302 (GETQFAPGNWCGVELDEPSGKNDGTVDDIRYFECKPKYGVFVP) is the CAP-Gly 2 domain. A phosphoserine mark is found at S309, S322, and S325. Position 327 is a phosphothreonine (T327). A Phosphoserine modification is found at S328. At T362 the chain carries Phosphothreonine. Coiled-coil stretches lie at residues 378-468 (QHVE…VSAT), 484-660 (GALQ…DMLR), 667-916 (EEKS…TKLK), 926-981 (LSSC…ELQA), 1001-1121 (ATGH…EAIQ), 1158-1549 (EADM…AQMN), and 1565-1600 (DIET…LETL). Residues 843 to 905 (QQAAASGEEG…GSLEEEAKKS (63 aa)) are disordered. Over residues 865-885 (QLKSQAEETQSELKSTQSNLE) the composition is skewed to polar residues. Disordered stretches follow at residues 1031-1052 (QLQD…KEKS) and 1400-1419 (KLDE…NEIQ). 2 stretches are compositionally biased toward basic and acidic residues: residues 1040–1052 (TKLK…KEKS) and 1410–1419 (SQKKSHNEIQ). Positions 1635–1665 (TEDCPIQGSEDQDYSTPSSESNNNEKERKLP) are disordered. Phosphothreonine is present on T1681. The residue at position 1682 (S1682) is a Phosphoserine.

In terms of assembly, interacts with Lva. In terms of tissue distribution, specifically expressed at the tip of the furrow in cellularizing blastoderms. CLIP-190 and jar are coexpressed at several times in development and in a number of tissues, including embryonic axonal neuron processes and posterior pole.

It is found in the cytoplasm. Its subcellular location is the cytoskeleton. The protein resides in the golgi apparatus. The protein localises to the microtubule organizing center. It localises to the perinuclear region. Functionally, together CLIP-190 and jar may coordinate the interaction between the actin and microtubule cytoskeleton. May link endocytic vesicles to microtubules. May play a role in formation of furrows during cellularization. In Drosophila melanogaster (Fruit fly), this protein is Restin homolog (CLIP-190).